Here is a 100-residue protein sequence, read N- to C-terminus: ATP phosphoribosyltransferase (100 aa).

This sequence belongs to the ATP phosphoribosyltransferase family. Long subfamily. In terms of assembly, equilibrium between an active dimeric form, an inactive hexameric form and higher aggregates. Interconversion between the various forms is largely reversible and is influenced by the natural substrates and inhibitors of the enzyme. Mg(2+) is required as a cofactor.

The protein localises to the cytoplasm. It catalyses the reaction 1-(5-phospho-beta-D-ribosyl)-ATP + diphosphate = 5-phospho-alpha-D-ribose 1-diphosphate + ATP. It functions in the pathway amino-acid biosynthesis; L-histidine biosynthesis; L-histidine from 5-phospho-alpha-D-ribose 1-diphosphate: step 1/9. With respect to regulation, feedback inhibited by histidine. Functionally, catalyzes the condensation of ATP and 5-phosphoribose 1-diphosphate to form N'-(5'-phosphoribosyl)-ATP (PR-ATP). Has a crucial role in the pathway because the rate of histidine biosynthesis seems to be controlled primarily by regulation of HisG enzymatic activity. The sequence is that of ATP phosphoribosyltransferase (hisG) from Klebsiella pneumoniae.